The sequence spans 249 residues: Zinc finger protein mnm-2 (249 aa).

Residues 20 to 65 (PKEELETEEEDEEEDEEEELSSSEVTSENDMETESASSSASSVGQP) form a disordered region. The segment covering 24–52 (LETEEEDEEEDEEEELSSSEVTSENDMET) has biased composition (acidic residues). 3 consecutive C2H2-type zinc fingers follow at residues 168 to 190 (YRCD…KRIH), 196 to 218 (FKCE…RLTH), and 224 to 246 (YVCG…MRTH).

As to expression, in larva and adult, expressed in the M3 pharyngeal motor neurons, extrapharyngeal neurons in the head, the PQR tail neurons, rectal cells, vulva cells, the spermetheca-uterine valve, body wall muscle cells and neurons of the ventral nerve cord. In the embryo, expressed in pharyngeal cells, extrapharyngeal head neurons and within the tail. Expressed in body wall muscle cells during late embryonic stages. Expressed in the mother cells of the M2 and M3 pharyngeal motor neurons precursor cells at the embryonic bean stage and subsequently in the M2 and M3 cells as they are born. Expression is sustained only in the two M3 cells up to at least the 5-day-old adult. In contrast, expression gradually declines in the M2 cells beginning from the time of their birth, and is completely undetectable by the time of hatching.

The protein resides in the nucleus. Functionally, required in the M3 pharyngeal motor neuron to guide the growth cone of the sister M2 motor neuron during axon development. This chain is Zinc finger protein mnm-2, found in Caenorhabditis elegans.